The following is a 743-amino-acid chain: Dynein regulatory complex protein 1 homolog (743 aa).

Acidic residues-rich tracts occupy residues 1-10 and 19-28; these read MDDNEDELEE and SVEEEEEVEP. Residues 1 to 34 are disordered; sequence MDDNEDELEEHQELVSDGSVEEEEEVEPDLGPVD. Coiled coils occupy residues 175-332 and 395-416; these read DQIE…VLMN and KLHS…NNRE. The tract at residues 599-620 is disordered; it reads NRLQGAAGGQPDEKEHRSTGDT. The stretch at 715-742 forms a coiled coil; the sequence is KMRVQYDAEVVFLRRQNEELRHLLQKFT.

This sequence belongs to the DRC1 family.

The polypeptide is Dynein regulatory complex protein 1 homolog (Drosophila melanogaster (Fruit fly)).